The primary structure comprises 458 residues: Chondroitin hydrolase (458 aa).

Residues Met1–Gly22 form the signal peptide. Positions Asn358 to Glu401 constitute an EGF-like domain. 3 disulfides stabilise this stretch: Cys362/Cys373, Cys367/Cys389, and Cys391/Cys400.

This sequence belongs to the glycosyl hydrolase 56 family.

In terms of biological role, endo-beta-galactosaminidase that specifically hydrolyzes chondroitin, releasing GlcUA-beta-(1-&gt;3)-GalNAc-beta-(1-&gt;4)-GlcUA-beta-(1-&gt;3)-GalNAc as the main product. Also hydrolyzes to a lesser extent chondroitin sulfates (CS-A, CS-C) and hyaluronic acid. May regulate the function of chondroitin in cell division. The polypeptide is Chondroitin hydrolase (Caenorhabditis elegans).